A 429-amino-acid chain; its full sequence is Histidine--tRNA ligase (429 aa).

Belongs to the class-II aminoacyl-tRNA synthetase family. In terms of assembly, homodimer.

It localises to the cytoplasm. The catalysed reaction is tRNA(His) + L-histidine + ATP = L-histidyl-tRNA(His) + AMP + diphosphate + H(+). In Streptococcus pneumoniae (strain P1031), this protein is Histidine--tRNA ligase.